Consider the following 179-residue polypeptide: Acireductone dioxygenase (179 aa).

Residues His99, His101, Glu105, and His143 each contribute to the Fe(2+) site. 4 residues coordinate Ni(2+): His99, His101, Glu105, and His143.

Belongs to the acireductone dioxygenase (ARD) family. In terms of assembly, monomer. Fe(2+) is required as a cofactor. Ni(2+) serves as cofactor.

The catalysed reaction is 1,2-dihydroxy-5-(methylsulfanyl)pent-1-en-3-one + O2 = 3-(methylsulfanyl)propanoate + CO + formate + 2 H(+). The enzyme catalyses 1,2-dihydroxy-5-(methylsulfanyl)pent-1-en-3-one + O2 = 4-methylsulfanyl-2-oxobutanoate + formate + 2 H(+). It functions in the pathway amino-acid biosynthesis; L-methionine biosynthesis via salvage pathway; L-methionine from S-methyl-5-thio-alpha-D-ribose 1-phosphate: step 5/6. Catalyzes 2 different reactions between oxygen and the acireductone 1,2-dihydroxy-3-keto-5-methylthiopentene (DHK-MTPene) depending upon the metal bound in the active site. Fe-containing acireductone dioxygenase (Fe-ARD) produces formate and 2-keto-4-methylthiobutyrate (KMTB), the alpha-ketoacid precursor of methionine in the methionine recycle pathway. Ni-containing acireductone dioxygenase (Ni-ARD) produces methylthiopropionate, carbon monoxide and formate, and does not lie on the methionine recycle pathway. The protein is Acireductone dioxygenase of Sulfurihydrogenibium sp. (strain YO3AOP1).